We begin with the raw amino-acid sequence, 337 residues long: F420-dependent glucose-6-phosphate dehydrogenase (337 aa).

Residue aspartate 44 coordinates coenzyme F420-(gamma-Glu)n. Histidine 45 functions as the Proton donor in the catalytic mechanism. Coenzyme F420-(gamma-Glu)n-binding positions include threonine 81 and 112-113 (TG). Glutamate 114 acts as the Proton acceptor in catalysis. Coenzyme F420-(gamma-Glu)n-binding positions include asparagine 117, 180–181 (GG), and 183–184 (GV). 4 residues coordinate substrate: threonine 198, lysine 201, lysine 262, and arginine 286.

It belongs to the F420-dependent glucose-6-phosphate dehydrogenase family. Homodimer.

It catalyses the reaction oxidized coenzyme F420-(gamma-L-Glu)(n) + D-glucose 6-phosphate + H(+) = 6-phospho-D-glucono-1,5-lactone + reduced coenzyme F420-(gamma-L-Glu)(n). Catalyzes the coenzyme F420-dependent oxidation of glucose 6-phosphate (G6P) to 6-phosphogluconolactone. This is F420-dependent glucose-6-phosphate dehydrogenase from Kineococcus radiotolerans (strain ATCC BAA-149 / DSM 14245 / SRS30216).